Consider the following 147-residue polypeptide: Hemoglobin subunit beta (147 aa).

Position 2 is an N-acetylvaline (Val-2). The Globin domain maps to 3–147 (HLTGEEKSAV…VANALAHKYH (145 aa)). The residue at position 13 (Thr-13) is a Phosphothreonine. Phosphoserine is present on Ser-45. An N6-acetyllysine modification is found at Lys-60. His-64 is a binding site for heme b. N6-acetyllysine is present on Lys-83. Position 93 (His-93) interacts with heme b. At Cys-94 the chain carries S-nitrosocysteine. Lys-145 carries the N6-acetyllysine modification.

Belongs to the globin family. As to quaternary structure, heterotetramer of two alpha chains and two beta chains. As to expression, red blood cells.

Functionally, involved in oxygen transport from the lung to the various peripheral tissues. In Callimico goeldii (Goeldi's marmoset), this protein is Hemoglobin subunit beta (HBB).